The chain runs to 246 residues: 3-deoxy-manno-octulosonate cytidylyltransferase (246 aa).

It belongs to the KdsB family.

It localises to the cytoplasm. It carries out the reaction 3-deoxy-alpha-D-manno-oct-2-ulosonate + CTP = CMP-3-deoxy-beta-D-manno-octulosonate + diphosphate. The protein operates within nucleotide-sugar biosynthesis; CMP-3-deoxy-D-manno-octulosonate biosynthesis; CMP-3-deoxy-D-manno-octulosonate from 3-deoxy-D-manno-octulosonate and CTP: step 1/1. Its pathway is bacterial outer membrane biogenesis; lipopolysaccharide biosynthesis. Activates KDO (a required 8-carbon sugar) for incorporation into bacterial lipopolysaccharide in Gram-negative bacteria. The protein is 3-deoxy-manno-octulosonate cytidylyltransferase of Rickettsia akari (strain Hartford).